Here is a 239-residue protein sequence, read N- to C-terminus: Fibroblast growth factor 3 (239 aa).

Positions 1–17 are cleaved as a signal peptide; sequence MGLIWLLLLSLLEPGWP. An N-linked (GlcNAc...) asparagine glycan is attached at N65. A disordered region spans residues 193 to 239; sequence QLQSGLPRPPGKGVQPRRRRQKQSPDNLEPSHVQASRLGSQLEASAH. Over residues 225 to 239 the composition is skewed to polar residues; the sequence is VQASRLGSQLEASAH.

The protein belongs to the heparin-binding growth factors family. In terms of assembly, interacts with FGFR1 and FGFR2. Affinity between fibroblast growth factors (FGFs) and their receptors is increased by heparan sulfate glycosaminoglycans that function as coreceptors.

Its subcellular location is the secreted. Plays an important role in the regulation of embryonic development, cell proliferation, and cell differentiation. Required for normal ear development. The sequence is that of Fibroblast growth factor 3 (FGF3) from Homo sapiens (Human).